Reading from the N-terminus, the 102-residue chain is Putative pterin-4-alpha-carbinolamine dehydratase (102 aa).

This sequence belongs to the pterin-4-alpha-carbinolamine dehydratase family.

It carries out the reaction (4aS,6R)-4a-hydroxy-L-erythro-5,6,7,8-tetrahydrobiopterin = (6R)-L-erythro-6,7-dihydrobiopterin + H2O. The polypeptide is Putative pterin-4-alpha-carbinolamine dehydratase (Burkholderia multivorans (strain ATCC 17616 / 249)).